We begin with the raw amino-acid sequence, 246 residues long: Auxin-responsive protein IAA11 (246 aa).

Positions 36–40 match the EAR-like (transcriptional repression) motif; that stretch reads LGLTL. The PB1 domain occupies 136 to 235; it reads SMFVKVTMDG…SVRRLRIMKT (100 aa).

The protein belongs to the Aux/IAA family. As to quaternary structure, homodimers and heterodimers. Interacts with TPL. Preferentially expressed in stems and flowers.

The protein localises to the nucleus. Aux/IAA proteins are short-lived transcriptional factors that function as repressors of early auxin response genes at low auxin concentrations. Repression is thought to result from the interaction with auxin response factors (ARFs), proteins that bind to the auxin-responsive promoter element (AuxRE). Formation of heterodimers with ARF proteins may alter their ability to modulate early auxin response genes expression. The chain is Auxin-responsive protein IAA11 (IAA11) from Arabidopsis thaliana (Mouse-ear cress).